A 92-amino-acid polypeptide reads, in one-letter code: DNA-binding protein HU (92 aa).

This sequence belongs to the bacterial histone-like protein family. As to quaternary structure, homodimer.

Functionally, histone-like DNA-binding protein which is capable of wrapping DNA to stabilize it, and thus to prevent its denaturation under extreme environmental conditions. The sequence is that of DNA-binding protein HU (hup) from Buchnera aphidicola subsp. Acyrthosiphon pisum (strain APS) (Acyrthosiphon pisum symbiotic bacterium).